A 381-amino-acid polypeptide reads, in one-letter code: Probable tRNA sulfurtransferase (381 aa).

The THUMP domain maps to 60-168 (REATEVLTRV…EGKAYIFVDK (109 aa)). Residues 186–187 (LL), lysine 269, glycine 291, and glutamine 300 contribute to the ATP site.

Belongs to the ThiI family.

It localises to the cytoplasm. It carries out the reaction [ThiI sulfur-carrier protein]-S-sulfanyl-L-cysteine + a uridine in tRNA + 2 reduced [2Fe-2S]-[ferredoxin] + ATP + H(+) = [ThiI sulfur-carrier protein]-L-cysteine + a 4-thiouridine in tRNA + 2 oxidized [2Fe-2S]-[ferredoxin] + AMP + diphosphate. The enzyme catalyses [ThiS sulfur-carrier protein]-C-terminal Gly-Gly-AMP + S-sulfanyl-L-cysteinyl-[cysteine desulfurase] + AH2 = [ThiS sulfur-carrier protein]-C-terminal-Gly-aminoethanethioate + L-cysteinyl-[cysteine desulfurase] + A + AMP + 2 H(+). Its pathway is cofactor biosynthesis; thiamine diphosphate biosynthesis. Catalyzes the ATP-dependent transfer of a sulfur to tRNA to produce 4-thiouridine in position 8 of tRNAs, which functions as a near-UV photosensor. Also catalyzes the transfer of sulfur to the sulfur carrier protein ThiS, forming ThiS-thiocarboxylate. This is a step in the synthesis of thiazole, in the thiamine biosynthesis pathway. The sulfur is donated as persulfide by IscS. This Thermococcus kodakarensis (strain ATCC BAA-918 / JCM 12380 / KOD1) (Pyrococcus kodakaraensis (strain KOD1)) protein is Probable tRNA sulfurtransferase.